The primary structure comprises 1210 residues: A disintegrin and metalloproteinase with thrombospondin motifs 19 (1210 aa).

Positions 1 to 30 are cleaved as a signal peptide; the sequence is MGPEMRLTRICCCCCLLYQLGFLSHGTTSG. Residues 31 to 319 constitute a propeptide that is removed on maturation; that stretch reads LQLTPDLEEW…KIADNRREKR (289 aa). Residue Asn54 is glycosylated (N-linked (GlcNAc...) asparagine). The segment at 55–166 is disordered; it reads ATGLSGGSSD…PAQQEEPSAE (112 aa). A compositionally biased stretch (gly residues) spans 69–78; it reads RSSGGGGRGQ. Basic and acidic residues predominate over residues 84–98; that stretch reads REVRSVARAPQEEAT. A compositionally biased stretch (acidic residues) spans 113 to 122; it reads GAEDEEELES. The span at 130–139 shows a compositional bias: polar residues; that stretch reads SGDTALSSGT. Residues 143-158 are compositionally biased toward pro residues; the sequence is WQPPLPPQRPSSPPPA. Asn263 is a glycosylation site (N-linked (GlcNAc...) asparagine). Positions 295 to 302 match the Cysteine switch motif; that stretch reads HHCGVISD. Cys297 provides a ligand contact to Zn(2+). The 221-residue stretch at 328-548 folds into the Peptidase M12B domain; that stretch reads YNIETVVVAD…KASSCLLHTD (221 aa). Cystine bridges form between Cys404/Cys469, Cys444/Cys451, Cys463/Cys543, Cys502/Cys527, Cys572/Cys596, Cys583/Cys604, Cys591/Cys623, Cys617/Cys628, Cys648/Cys683, Cys652/Cys688, and Cys663/Cys673. His485 is a binding site for Zn(2+). Glu486 is an active-site residue. Residues His489 and His495 each coordinate Zn(2+). Positions 549 to 636 constitute a Disintegrin domain; it reads PQSLSSVLVP…ECTRRTPAPE (88 aa). Positions 637-689 constitute a TSP type-1 1 domain; that stretch reads HLAGEWSPWSSCSRSCSSGVSSRERKCPGLGSEARDCNGPRKQYRICENPPCP. Residues 794-917 are spacer; it reads VIKGDFNHTR…PDNQSSKEPG (124 aa). Residues Asn800, Asn910, Asn931, Asn952, and Asn1012 are each glycosylated (N-linked (GlcNAc...) asparagine). 4 consecutive TSP type-1 domains span residues 918-978, 979-1040, 1042-1086, and 1090-1147; these read PLFM…NEQP, CQTR…QDCM, VWEA…EDCE, and KCYV…QPCN. Disulfide bonds link Cys991/Cys1034, Cys995/Cys1039, and Cys1006/Cys1023. Positions 1163–1202 constitute a PLAC domain; that stretch reads LTFKCLGDQWPVYCRVIREKNLCQDMRWYQRCCETCRDFY.

Requires Zn(2+) as cofactor. In terms of processing, the precursor is cleaved by a furin endopeptidase. Glycosylated. Can be O-fucosylated by POFUT2 on a serine or a threonine residue found within the consensus sequence C1-X(2)-(S/T)-C2-G of the TSP type-1 repeat domains where C1 and C2 are the first and second cysteine residue of the repeat, respectively. Fucosylated repeats can then be further glycosylated by the addition of a beta-1,3-glucose residue by the glucosyltransferase, B3GALTL. Fucosylation mediates the efficient secretion of ADAMTS family members. Can also be C-glycosylated with one or two mannose molecules on tryptophan residues within the consensus sequence W-X-X-W of the TPRs, and N-glycosylated. These other glycosylations can also facilitate secretion. As to expression, expressed predominantly in fetal ovary, low levels of expression is also detected in kidney, heart, skeletal muscle, lung and testis.

It localises to the secreted. The protein resides in the extracellular space. Its subcellular location is the extracellular matrix. The chain is A disintegrin and metalloproteinase with thrombospondin motifs 19 (Adamts19) from Mus musculus (Mouse).